A 370-amino-acid polypeptide reads, in one-letter code: Pyruvate dehydrogenase E1 component subunit alpha (370 aa).

As to quaternary structure, heterodimer of an alpha and a beta chain. It depends on thiamine diphosphate as a cofactor.

It carries out the reaction N(6)-[(R)-lipoyl]-L-lysyl-[protein] + pyruvate + H(+) = N(6)-[(R)-S(8)-acetyldihydrolipoyl]-L-lysyl-[protein] + CO2. The pyruvate dehydrogenase complex catalyzes the overall conversion of pyruvate to acetyl-CoA and CO(2). It contains multiple copies of three enzymatic components: pyruvate dehydrogenase (E1), dihydrolipoamide acetyltransferase (E2) and lipoamide dehydrogenase (E3). The chain is Pyruvate dehydrogenase E1 component subunit alpha (pdhA) from Staphylococcus epidermidis (strain ATCC 35984 / DSM 28319 / BCRC 17069 / CCUG 31568 / BM 3577 / RP62A).